The primary structure comprises 622 residues: MVVPGNSPGIPRDHAIDISDRAMDLEAEPDHSSDLKEVQKLHELVKRLEIQNQQLKIKRNPQSSNIQNISGIDNQLSALNCSGVMNSINIQPEKGDLQKMPNLQSQLEQISSEKENIPALGMDAQMQYEKVCSDSKPGSKVEINCDQDDCCFYSVDGSGRSDLEEAISKMSELNSSGENILDETALDEVDVLELGSCSEDEEDCWLYVSPRKVENAEQKLDSPLKWCRQVLDHHSPETEAACRSLIGKLDQASRWKSLYCSPLASPSAYNTNAECSYGSNTLNSPGCLKSTNKALLTCGSSGYLSFHSALSSQSSVDSELSTSDDSISMGYKLQDLTDVQVMARLQEESLRQDYASSSASVSRRSSSASLHSLRRGTFSDQEFDTYSLEDEDDCDCSLSFRSSHRYSPSPLSSPRCQSPSAAESRATTSRIRPPRRSIQNHVQERMKYANCEDELRHSMPNLAKTSLRSLEAVRSSRSLESDLQGPSSRLTRMQQPSTSTPPSKVRYGASNQPALTVRQPGKPGVSTSSLMTSRQPVKSSGYNNSSGLRKIQSSPGLNPSGSGAVSRTGNASSSIKHSTVKSQASMGSTVPKSKMIQPSRRSLSSAKMNSTLDDDSWKDGCY.

The stretch at 34 to 60 (DLKEVQKLHELVKRLEIQNQQLKIKRN) forms a coiled coil. Disordered stretches follow at residues 404 to 441 (HRYS…IQNH) and 473 to 622 (VRSS…DGCY). The span at 405–415 (RYSPSPLSSPR) shows a compositional bias: low complexity. Composition is skewed to polar residues over residues 416-430 (CQSP…TTSR), 484-502 (QGPS…STPP), 525-591 (VSTS…STVP), and 599-611 (SRRS…MNST).

This sequence belongs to the SLAIN motif-containing family.

The sequence is that of SLAIN motif-containing protein-like from Xenopus tropicalis (Western clawed frog).